We begin with the raw amino-acid sequence, 196 residues long: APGW-amide-related neuropeptide (196 aa).

Residues 1–22 (METLNIFLVIFSLLGTIIIASS) form the signal peptide. A propeptide spanning residues 23–48 (SDESSERKKRDLDTIDDTNNDFLTAD) is cleaved from the precursor. The residue at position 54 (tryptophan 54) is a Tryptophan amide. The propeptide occupies 58–68 (SFDDDILNNLD). At tryptophan 74 the chain carries Tryptophan amide. Residues 78 to 88 (SDMLFDSEEIE) constitute a propeptide that is removed on maturation. Tryptophan 94 carries the tryptophan amide modification. Positions 98–105 (SSSLYDDE) are excised as a propeptide. The residue at position 111 (tryptophan 111) is a Tryptophan amide. A propeptide spanning residues 115-129 (SSALLDDLSLYNSIV) is cleaved from the precursor. Residue tryptophan 135 is modified to Tryptophan amide. The propeptide occupies 139 to 146 (SDTFKVDI). A tryptophan amide mark is found at tryptophan 151 and tryptophan 158. A propeptide spanning residues 162 to 196 (SGPNMCMDFQDEILQLYKLLNEAEKLHSECEALNI) is cleaved from the precursor.

As to expression, expressed in cerebral, pedal and visceral ganglia. TPGW-amide is found in pedal and cerebral ganglia and in shell adductor muscle (at protein level). RPGW-amide and KPGW-amide are found in pedal retractor muscle, ABRM and shell adductor muscle (at protein level).

Functionally, RPGW-amide, KPGW-amide and TPGW-amide tetrapeptides are involved in control of muscle contraction and may function as neurotransmitters. These peptides increase tension of the pedal retractor muscle and, in conjunction with FMRF-amide, increase peak tension of the anterior byssus retractor muscle (ABRM). In Mytilus edulis (Blue mussel), this protein is APGW-amide-related neuropeptide.